Here is a 744-residue protein sequence, read N- to C-terminus: Tripartite motif-containing protein 3 (744 aa).

Position 2 is an N-acetylalanine (alanine 2). The interval 2-290 (AKREDSPGPE…LAAQAFPERP (289 aa)) is interaction with KIF21B. Phosphoserine is present on serine 7. The RING-type zinc-finger motif lies at 22 to 63 (CSICLDRYRCPKVLPCLHTFCERCLQNYIPPQSLTLSCPVCR). The B box-type zinc-finger motif lies at 110 to 151 (GRPLSCPNHEGKTMEFYCEACETAMCGECRAGEHREHGTVLL). Zn(2+) contacts are provided by cysteine 115, histidine 118, cysteine 138, and histidine 143. The stretch at 153-224 (DVVEQHKAAL…RKQALVSDLE (72 aa)) forms a coiled coil. One copy of the Filamin repeat lies at 317–418 (TTSAAAHETV…VRGSPFRVRA (102 aa)). The tract at residues 420-462 (RPGDLPPSPDDVKRRVKSPGGPGSHVRQKAVRRPSSMYSTGGK) is disordered. Serine 427 carries the post-translational modification Phosphoserine. NHL repeat units follow at residues 473 to 516 (VFRV…FSNE), 520 to 563 (KFRF…FSPE), 564 to 605 (GKFK…FQPN), 609 to 652 (VGRF…YSAD), 656 to 699 (LFKF…FDSS), and 700 to 743 (GSFL…YRYL).

Belongs to the TRIM/RBCC family. Forms homooligomers. Interacts with TRIM2; this interaction reduces TRIM2 activity. Associates with myosin-Vb (MYO5B) and alpha-actinin-4 (ACTN4). Component of the CART complex, at least composed of ACTN4, HGS/HRS, MYO5B and TRIM3. Interacts with ZFYVE28/LST2. Interacts with KIF21B. Highly expressed in the brain, moderate levels in the lung, very low levels in the liver, kidney and heart. In the brain, expression was highest in the cerebellum. Expression in the brain is found at low levels at embryonic day 15 and then increases during the first two postnatal weeks before decreasing through adulthood.

It localises to the cytoplasm. The protein localises to the early endosome. It is found in the golgi apparatus. The protein resides in the trans-Golgi network. Its subcellular location is the cell projection. It localises to the dendrite. It carries out the reaction S-ubiquitinyl-[E2 ubiquitin-conjugating enzyme]-L-cysteine + [acceptor protein]-L-lysine = [E2 ubiquitin-conjugating enzyme]-L-cysteine + N(6)-ubiquitinyl-[acceptor protein]-L-lysine.. In terms of biological role, E3 ubiquitin ligase that plays essential roles in neuronal functions such as regulation of neuronal plasticity, learning, and memory. In addition to its neuronal functions, participates in other biological processes such as innate immunity or cell cycle regulation. Component of the cytoskeleton-associated recycling or transport complex in neurons, polyubiquitinates gamma-actin, thus regulating neuronal plasticity, learning, and memory. Ubiquitinates postsynaptic scaffold GKAP, a neuronal substrate involved in synaptic remodeling and thereby modulates dendritic spine morphology. Positively regulates motility of microtubule-dependent motor protein KIF21B. Induces growth arrest via its RING-dependent E3 ligase activity and ubiquinates CDKN1A. Positively regulates TLR3-mediated signaling by mediating 'Lys-63'-linked polyubiquitination of TLR3. In turn, promotes the recognition and sorting of polyubiquitinated TLR3 by the ESCRT complexes. The chain is Tripartite motif-containing protein 3 (Trim3) from Rattus norvegicus (Rat).